The following is a 480-amino-acid chain: Protein nucleotidyltransferase YdiU (480 aa).

Residues glycine 87, glycine 89, arginine 90, lysine 110, aspartate 122, glycine 123, arginine 173, and arginine 180 each contribute to the ATP site. Aspartate 245 (proton acceptor) is an active-site residue. Residues asparagine 246 and aspartate 255 each coordinate Mg(2+). An ATP-binding site is contributed by aspartate 255.

This sequence belongs to the SELO family. Mg(2+) serves as cofactor. Requires Mn(2+) as cofactor.

The enzyme catalyses L-seryl-[protein] + ATP = 3-O-(5'-adenylyl)-L-seryl-[protein] + diphosphate. The catalysed reaction is L-threonyl-[protein] + ATP = 3-O-(5'-adenylyl)-L-threonyl-[protein] + diphosphate. It catalyses the reaction L-tyrosyl-[protein] + ATP = O-(5'-adenylyl)-L-tyrosyl-[protein] + diphosphate. It carries out the reaction L-histidyl-[protein] + UTP = N(tele)-(5'-uridylyl)-L-histidyl-[protein] + diphosphate. The enzyme catalyses L-seryl-[protein] + UTP = O-(5'-uridylyl)-L-seryl-[protein] + diphosphate. The catalysed reaction is L-tyrosyl-[protein] + UTP = O-(5'-uridylyl)-L-tyrosyl-[protein] + diphosphate. Functionally, nucleotidyltransferase involved in the post-translational modification of proteins. It can catalyze the addition of adenosine monophosphate (AMP) or uridine monophosphate (UMP) to a protein, resulting in modifications known as AMPylation and UMPylation. The sequence is that of Protein nucleotidyltransferase YdiU from Jannaschia sp. (strain CCS1).